The sequence spans 4171 residues: Cytoplasmic dynein 2 heavy chain 1 (4171 aa).

The tract at residues 1–1598 (MSSDSKDQRK…VLRQVSSEFE (1598 aa)) is stem. 115-122 (GKELTEGN) contacts ATP. Coiled-coil stretches lie at residues 164 to 203 (ANDY…CDEL), 629 to 693 (KQLE…KEEE), 829 to 861 (DLEE…AERL), 927 to 1048 (EIAE…KEKR), and 1354 to 1383 (SRQS…LEQK). AAA stretches follow at residues 1599 to 1823 (YTYE…VLGG), 1883 to 2100 (EPLG…VRSH), 2184 to 2432 (VTKE…WVVS), and 2527 to 2767 (RFAF…PIKY). ATP contacts are provided by residues 1637–1644 (GPAGTGKT), 1921–1928 (GAAGSGKS), 2226–2233 (GTTGCGKQ), and 2565–2572 (GRPGFGRR). The segment at 2776–3064 (QLLGYKRLTL…VDLDREQDTI (289 aa)) is stalk. Coiled-coil stretches lie at residues 2790-2877 (ERLK…KEVQ), 2999-3059 (EKIA…DLDR), and 3308-3336 (ELEE…LLLQ). AAA regions lie at residues 3140–3367 (ASLE…IITK) and 3575–3784 (LMDF…FVEQ).

The protein belongs to the dynein heavy chain family. In terms of assembly, the cytoplasmic dynein complex 2 is probably composed by a heavy chain che-3 homodimer and a number of light intermediate chains.

The protein localises to the cell projection. It is found in the cilium membrane. Its subcellular location is the cytoplasm. It localises to the cytoskeleton. Its function is as follows. Functions as a motor for intraflagellar retrograde transport in chemosensory neurons. Functions in cilia biogenesis. In Caenorhabditis elegans, this protein is Cytoplasmic dynein 2 heavy chain 1.